A 297-amino-acid chain; its full sequence is Tyrosine recombinase XerD (297 aa).

The Core-binding (CB) domain maps to 1–86 (MNDLIEDFLH…SLRSFFHYLM (86 aa)). Residues 107 to 291 (GLPKVLNLDD…TKLRLKDVYK (185 aa)) form the Tyr recombinase domain. Active-site residues include R147, K171, H243, R246, and H269. Y278 functions as the O-(3'-phospho-DNA)-tyrosine intermediate in the catalytic mechanism.

This sequence belongs to the 'phage' integrase family. XerD subfamily. Forms a cyclic heterotetrameric complex composed of two molecules of XerC and two molecules of XerD.

The protein localises to the cytoplasm. In terms of biological role, site-specific tyrosine recombinase, which acts by catalyzing the cutting and rejoining of the recombining DNA molecules. The XerC-XerD complex is essential to convert dimers of the bacterial chromosome into monomers to permit their segregation at cell division. It also contributes to the segregational stability of plasmids. The polypeptide is Tyrosine recombinase XerD (Listeria monocytogenes serovar 1/2a (strain ATCC BAA-679 / EGD-e)).